A 398-amino-acid polypeptide reads, in one-letter code: NADH-quinone oxidoreductase subunit D (398 aa).

The protein belongs to the complex I 49 kDa subunit family. In terms of assembly, NDH-1 is composed of 14 different subunits. Subunits NuoB, C, D, E, F, and G constitute the peripheral sector of the complex.

It localises to the cell inner membrane. The enzyme catalyses a quinone + NADH + 5 H(+)(in) = a quinol + NAD(+) + 4 H(+)(out). In terms of biological role, NDH-1 shuttles electrons from NADH, via FMN and iron-sulfur (Fe-S) centers, to quinones in the respiratory chain. The immediate electron acceptor for the enzyme in this species is believed to be ubiquinone. Couples the redox reaction to proton translocation (for every two electrons transferred, four hydrogen ions are translocated across the cytoplasmic membrane), and thus conserves the redox energy in a proton gradient. In Caulobacter vibrioides (strain ATCC 19089 / CIP 103742 / CB 15) (Caulobacter crescentus), this protein is NADH-quinone oxidoreductase subunit D.